We begin with the raw amino-acid sequence, 397 residues long: Elongation factor Tu (397 aa).

Residues 10–207 form the tr-type G domain; sequence LPHVNVGTIG…TLDSYIPEPE (198 aa). The interval 19–26 is G1; the sequence is GHVDHGKT. 19-26 serves as a coordination point for GTP; that stretch reads GHVDHGKT. Residue Thr-26 participates in Mg(2+) binding. A G2 region spans residues 60–64; that stretch reads GITIN. Residues 81–84 form a G3 region; it reads DCPG. Residues 81–85 and 136–139 contribute to the GTP site; these read DCPGH and NKAD. Residues 136 to 139 form a G4 region; that stretch reads NKAD. The tract at residues 174 to 176 is G5; that stretch reads SAR.

Belongs to the TRAFAC class translation factor GTPase superfamily. Classic translation factor GTPase family. EF-Tu/EF-1A subfamily. As to quaternary structure, monomer.

It is found in the cytoplasm. It catalyses the reaction GTP + H2O = GDP + phosphate + H(+). GTP hydrolase that promotes the GTP-dependent binding of aminoacyl-tRNA to the A-site of ribosomes during protein biosynthesis. This chain is Elongation factor Tu, found in Pseudomonas fluorescens (strain Pf0-1).